The sequence spans 95 residues: Small ribosomal subunit protein bS6 (95 aa).

The protein belongs to the bacterial ribosomal protein bS6 family.

In terms of biological role, binds together with bS18 to 16S ribosomal RNA. This is Small ribosomal subunit protein bS6 from Clostridium beijerinckii (strain ATCC 51743 / NCIMB 8052) (Clostridium acetobutylicum).